The primary structure comprises 331 residues: 6-phosphogluconolactonase (331 aa).

Belongs to the cycloisomerase 2 family.

It catalyses the reaction 6-phospho-D-glucono-1,5-lactone + H2O = 6-phospho-D-gluconate + H(+). It functions in the pathway carbohydrate degradation; pentose phosphate pathway; D-ribulose 5-phosphate from D-glucose 6-phosphate (oxidative stage): step 2/3. Functionally, catalyzes the hydrolysis of 6-phosphogluconolactone to 6-phosphogluconate. The sequence is that of 6-phosphogluconolactonase from Serratia proteamaculans (strain 568).